A 150-amino-acid polypeptide reads, in one-letter code: UPF0208 membrane protein VIBHAR_02941 (150 aa).

Helical transmembrane passes span 42 to 62 and 70 to 90; these read FGIK…MAFN and AIVV…WLGS.

The protein belongs to the UPF0208 family.

The protein localises to the cell inner membrane. This chain is UPF0208 membrane protein VIBHAR_02941, found in Vibrio campbellii (strain ATCC BAA-1116).